The sequence spans 277 residues: Undecaprenyl-diphosphatase (277 aa).

Transmembrane regions (helical) follow at residues 3-23 (YIIE…TEIF), 48-68 (LTLF…IYYF), 97-117 (ISYA…GLLI), 125-145 (LLSI…VFLL), 198-218 (SFLC…YDAI), 227-247 (IPGF…TIKI), and 257-277 (LIWF…LYII).

The protein belongs to the UppP family.

It is found in the cell membrane. It carries out the reaction di-trans,octa-cis-undecaprenyl diphosphate + H2O = di-trans,octa-cis-undecaprenyl phosphate + phosphate + H(+). Catalyzes the dephosphorylation of undecaprenyl diphosphate (UPP). Confers resistance to bacitracin. The sequence is that of Undecaprenyl-diphosphatase from Acholeplasma laidlawii (strain PG-8A).